We begin with the raw amino-acid sequence, 94 residues long: Acylphosphatase (94 aa).

The Acylphosphatase-like domain maps to 7–94 (AVQARVYGRV…TAPGDFRIVA (88 aa)). Active-site residues include arginine 22 and asparagine 40.

It belongs to the acylphosphatase family.

The enzyme catalyses an acyl phosphate + H2O = a carboxylate + phosphate + H(+). In Mesorhizobium japonicum (strain LMG 29417 / CECT 9101 / MAFF 303099) (Mesorhizobium loti (strain MAFF 303099)), this protein is Acylphosphatase (acyP).